Here is a 118-residue protein sequence, read N- to C-terminus: NADH-ubiquinone oxidoreductase chain 3 (118 aa).

3 helical membrane-spanning segments follow: residues 9 to 29, 62 to 82, and 87 to 107; these read IYLVISLLVCLIPLGVPFLFA, LVSILFIIFDLEVTFFFPWAV, and IDLFGFWSMMVFLLILTIGFL.

This sequence belongs to the complex I subunit 3 family.

It localises to the mitochondrion membrane. The catalysed reaction is a ubiquinone + NADH + 5 H(+)(in) = a ubiquinol + NAD(+) + 4 H(+)(out). Core subunit of the mitochondrial membrane respiratory chain NADH dehydrogenase (Complex I) that is believed to belong to the minimal assembly required for catalysis. Complex I functions in the transfer of electrons from NADH to the respiratory chain. The immediate electron acceptor for the enzyme is believed to be ubiquinone. The chain is NADH-ubiquinone oxidoreductase chain 3 (NAD3) from Pinus sylvestris (Scotch pine).